Reading from the N-terminus, the 1482-residue chain is Cystic fibrosis transmembrane conductance regulator (1482 aa).

Residues 1–77 lie on the Cytoplasmic side of the membrane; sequence MQRSPLEKAS…KLINALQRCF (77 aa). Residues 78–98 traverse the membrane as a helical segment; the sequence is FWRFTFYGILLYLGEVTKAIQ. The region spanning 81–365 is the ABC transmembrane type-1 1 domain; that stretch reads FTFYGILLYL…WAVQTWYDSL (285 aa). At 99–122 the chain is on the extracellular side; that stretch reads PLLLGRIIASYDPDNKMERSIAIY. The chain crosses the membrane as a helical span at residues 123-146; the sequence is LGIGLCLLFIMRTLLLHPAIFGLH. Residues 147–195 are Cytoplasmic-facing; it reads HIGMQMRIALFSLIYKKTLKLSSRVLDKISIGQLVSLLSNNLNKFDEGL. The helical transmembrane segment at 196–216 threads the bilayer; it reads ALAHFVWIAPLQVMLLMGLLW. At 217–222 the chain is on the extracellular side; it reads ELLQAS. Residues 223–243 form a helical membrane-spanning segment; that stretch reads AFCGLAFLIVLALLQAGLGRM. Topologically, residues 244–298 are cytoplasmic; sequence MMKYRDQRAGKINERLVITSEMIENIQSVKAYCWEEAMEKMIENLRQTELRLTRK. Residues 299–319 form a helical membrane-spanning segment; that stretch reads AAYVRYVNSSAFFFSGFFVVF. At 320-339 the chain is on the extracellular side; the sequence is LSVLPYALIKGIILRKIFTT. A helical transmembrane segment spans residues 340–358; the sequence is ISFCIVLRMAVTRQFPWAV. The Cytoplasmic segment spans residues 359–859; that stretch reads QTWYDSLGAI…YLRYITVHKN (501 aa). Residues Trp-401, 458-465, and Gln-493 contribute to the ATP site; that span reads GSTGAGKT. One can recognise an ABC transporter 1 domain in the interval 423 to 646; sequence SGDNRLFFSN…RPDFSSKLMG (224 aa). Cys-524 is lipidated: S-palmitoyl cysteine. Residues Ser-549 and Ser-660 each carry the phosphoserine modification. Residues 654–832 form a disordered R region region; sequence SAERRNSILT…EEINEEDLKE (179 aa). Ser-670 is subject to Phosphoserine; by PKA. Phosphoserine is present on Ser-686. A Glycyl lysine isopeptide (Lys-Gly) (interchain with G-Cter in ubiquitin) cross-link involves residue Lys-688. Phosphoserine is present on residues Ser-700 and Ser-712. The residue at position 717 (Thr-717) is a Phosphothreonine. Phosphoserine is present on residues Ser-737, Ser-768, Ser-791, Ser-796, and Ser-814. The chain crosses the membrane as a helical span at residues 860–880; that stretch reads LIFVLIWCLVIFLAEVAASLV. The region spanning 860–1156 is the ABC transmembrane type-1 2 domain; the sequence is LIFVLIWCLV…AVNSSIDVDS (297 aa). At 881–919 the chain is on the extracellular side; the sequence is AFWLIEKTRPQDKGNSTRSTNNTSPVIITSTSAFYMFYI. N-linked (GlcNAc...) asparagine glycans are attached at residues Asn-895 and Asn-901. A discontinuously helical transmembrane segment spans residues 920 to 940; it reads YVGVADSLLALGFLRGLPLVH. The Cytoplasmic portion of the chain corresponds to 941-991; that stretch reads TLITVSKILHQKMLHSVLHAPMSTLNTLKAGAILNRFSKDIAILDDLLPLT. A helical transmembrane segment spans residues 992–1012; it reads IFDFIQLVLIVIGAVVVVSIL. Over 1013 to 1014 the chain is Extracellular; sequence KP. Residues 1015–1035 traverse the membrane as a helical segment; the sequence is YIFLAAVPVIIAFVILRAYFL. Residues 1036 to 1096 lie on the Cytoplasmic side of the membrane; it reads QTSQQLKQLE…TATWFLYLST (61 aa). The chain crosses the membrane as a helical span at residues 1097 to 1117; it reads LRWFQMRIEMIFVVFFVAVTF. Over 1118–1131 the chain is Extracellular; that stretch reads ISILTTGEGEGTVG. A helical transmembrane segment spans residues 1132 to 1152; sequence IILTLAMNIMSTLQWAVNSSI. Residues 1153–1482 are Cytoplasmic-facing; sequence DVDSLMRSVS…AEEEVQDTRL (330 aa). Residues 1212 to 1445 enclose the ABC transporter 2 domain; it reads ITVKDLTAKY…KSLFQQAISP (234 aa). ATP contacts are provided by residues Tyr-1221 and 1246–1253; that span reads GRTGSGKS. Positions 1388–1482 are interaction with GORASP2; the sequence is RALKQAFADC…AEEEVQDTRL (95 aa). The S-palmitoyl cysteine moiety is linked to residue Cys-1397. Phosphoserine occurs at positions 1446 and 1458. The interval 1454–1482 is disordered; the sequence is QRSSSKHRSRAQITALKEEAEEEVQDTRL. Over residues 1472–1482 the composition is skewed to acidic residues; it reads EAEEEVQDTRL. The short motif at 1480–1482 is the PDZ-binding element; the sequence is TRL.

Belongs to the ABC transporter superfamily. ABCC family. CFTR transporter (TC 3.A.1.202) subfamily. In terms of assembly, monomer; does not require oligomerization for channel activity. May form oligomers in the membrane. Interacts with SLC26A3, SLC26A6 and NHERF1. Interacts with SHANK2. Interacts with MYO6. Interacts (via C-terminus) with GOPC (via PDZ domain); this promotes CFTR internalization and thereby decreases channel activity. Interacts with SLC4A7 through NHERF1. Found in a complex with MYO5B and RAB11A. Interacts with ANO1. Interacts with SLC26A8. Interacts with AHCYL1; the interaction increases CFTR activity. Interacts with CSE1L. The core-glycosylated form interacts with GORASP2 (via PDZ GRASP-type 1 domain) in respone to ER stress. Interacts with MARCHF2; the interaction leads to CFTR ubiqtuitination and degradation. Interacts with ADGRG2. In terms of processing, N-glycosylated. Phosphorylated; cAMP treatment promotes phosphorylation and activates the channel. Dephosphorylation decreases the ATPase activity (in vitro). Phosphorylation at PKA sites activates the channel. Phosphorylation at PKC sites enhances the response to phosphorylation by PKA. Phosphorylated by AMPK; this inhibits channel activity. Post-translationally, ubiquitinated, leading to its degradation in the lysosome. Deubiquitination by USP10 in early endosomes enhances its endocytic recycling to the cell membrane. Ubiquitinated by RNF185 during ER stress. Ubiquitinated by MARCHF2.

The protein localises to the apical cell membrane. It localises to the early endosome membrane. Its subcellular location is the cell membrane. The protein resides in the recycling endosome membrane. It is found in the endoplasmic reticulum membrane. The protein localises to the nucleus. It catalyses the reaction ATP + H2O + closed Cl(-) channel = ADP + phosphate + open Cl(-) channel.. It carries out the reaction chloride(in) = chloride(out). The enzyme catalyses hydrogencarbonate(in) = hydrogencarbonate(out). The catalysed reaction is ATP + H2O = ADP + phosphate + H(+). Its function is as follows. Epithelial ion channel that plays an important role in the regulation of epithelial ion and water transport and fluid homeostasis. Mediates the transport of chloride ions across the cell membrane. Possesses an intrinsic ATPase activity and utilizes ATP to gate its channel; the passive flow of anions through the channel is gated by cycles of ATP binding and hydrolysis by the ATP-binding domains. The ion channel is also permeable to HCO(3)(-); selectivity depends on the extracellular chloride concentration. Exerts its function also by modulating the activity of other ion channels and transporters. Contributes to the regulation of the pH and the ion content of the epithelial fluid layer. Modulates the activity of the epithelial sodium channel (ENaC) complex, in part by regulating the cell surface expression of the ENaC complex. May regulate bicarbonate secretion and salvage in epithelial cells by regulating the transporter SLC4A7. Can inhibit the chloride channel activity of ANO1. Plays a role in the chloride and bicarbonate homeostasis during sperm epididymal maturation and capacitation. The sequence is that of Cystic fibrosis transmembrane conductance regulator from Rhinolophus ferrumequinum (Greater horseshoe bat).